The following is a 348-amino-acid chain: Dihydroorotase (348 aa).

Zn(2+) is bound by residues His14 and His16. Substrate-binding positions include 16–18 (HLR) and Asn42. Residues Lys100, His137, and His175 each coordinate Zn(2+). Lys100 is modified (N6-carboxylysine). Residue His137 participates in substrate binding. Leu220 provides a ligand contact to substrate. Residue Asp248 participates in Zn(2+) binding. Asp248 is an active-site residue. 2 residues coordinate substrate: His252 and Ala264.

Belongs to the metallo-dependent hydrolases superfamily. DHOase family. Class II DHOase subfamily. As to quaternary structure, homodimer. It depends on Zn(2+) as a cofactor.

The enzyme catalyses (S)-dihydroorotate + H2O = N-carbamoyl-L-aspartate + H(+). The protein operates within pyrimidine metabolism; UMP biosynthesis via de novo pathway; (S)-dihydroorotate from bicarbonate: step 3/3. Functionally, catalyzes the reversible cyclization of carbamoyl aspartate to dihydroorotate. In Pseudomonas aeruginosa (strain LESB58), this protein is Dihydroorotase.